The primary structure comprises 308 residues: Maspardin (308 aa).

The 73-residue stretch at 87–159 folds into the AB hydrolase-1 domain; the sequence is FCDGFRKLLD…NSFWLMPAFM (73 aa). Phosphoserine is present on S304.

This sequence belongs to the AB hydrolase superfamily. Interacts with CD4. Interacts with ALDH16A1. In terms of tissue distribution, expressed in all tissues tested, including heart, brain, placenta, lung, liver, skeletal muscle, kidney and pancreas. Expressed in J.CaM1.6, HuT 78 and HeLa cell lines (at protein level).

The protein localises to the cytoplasm. It localises to the cytosol. It is found in the membrane. Its subcellular location is the endosome membrane. The protein resides in the golgi apparatus. The protein localises to the trans-Golgi network membrane. Its function is as follows. May play a role as a negative regulatory factor in CD4-dependent T-cell activation. The chain is Maspardin (SPG21) from Homo sapiens (Human).